Here is a 188-residue protein sequence, read N- to C-terminus: MSKAGASLATCYGPVSADVIAKAENIRLLILDVDGVLSDGLIYMGNNGEELKAFNVRDGYGIRCALTSDIEVAIITGRKAKLVEDRCATLGITHLYQGQSNKLIAFSDLLEKLAIAPENVAYVGDDLIDWPVMEKVGLSVAVADAHPLLIPRADYVTRIAGGRGAVREVCDLLLLAQGKLDEAKGQSI.

Mg(2+) is bound by residues D32 and D34. Substrate contacts are provided by residues D34, 55–59 (NVRDG), R63, R78, R86, and K102. Residue D125 participates in Mg(2+) binding.

This sequence belongs to the KdsC family. As to quaternary structure, homotetramer. It depends on Mg(2+) as a cofactor.

It carries out the reaction 3-deoxy-alpha-D-manno-2-octulosonate-8-phosphate + H2O = 3-deoxy-alpha-D-manno-oct-2-ulosonate + phosphate. The protein operates within carbohydrate biosynthesis; 3-deoxy-D-manno-octulosonate biosynthesis; 3-deoxy-D-manno-octulosonate from D-ribulose 5-phosphate: step 3/3. It functions in the pathway bacterial outer membrane biogenesis; lipopolysaccharide biosynthesis. Functionally, catalyzes the hydrolysis of 3-deoxy-D-manno-octulosonate 8-phosphate (KDO 8-P) to 3-deoxy-D-manno-octulosonate (KDO) and inorganic phosphate. The sequence is that of 3-deoxy-D-manno-octulosonate 8-phosphate phosphatase KdsC from Escherichia coli (strain K12).